A 619-amino-acid polypeptide reads, in one-letter code: Dihydroxy-acid dehydratase 1 (619 aa).

Residue aspartate 81 participates in Mg(2+) binding. Cysteine 122 lines the [2Fe-2S] cluster pocket. Mg(2+) contacts are provided by aspartate 123 and lysine 124. Lysine 124 carries the N6-carboxylysine modification. A [2Fe-2S] cluster-binding site is contributed by cysteine 198. Mg(2+) is bound at residue glutamate 494. Serine 520 serves as the catalytic Proton acceptor.

Belongs to the IlvD/Edd family. As to quaternary structure, homodimer. [2Fe-2S] cluster is required as a cofactor. The cofactor is Mg(2+).

The enzyme catalyses (2R)-2,3-dihydroxy-3-methylbutanoate = 3-methyl-2-oxobutanoate + H2O. The catalysed reaction is (2R,3R)-2,3-dihydroxy-3-methylpentanoate = (S)-3-methyl-2-oxopentanoate + H2O. It functions in the pathway amino-acid biosynthesis; L-isoleucine biosynthesis; L-isoleucine from 2-oxobutanoate: step 3/4. It participates in amino-acid biosynthesis; L-valine biosynthesis; L-valine from pyruvate: step 3/4. Its function is as follows. Functions in the biosynthesis of branched-chain amino acids. Catalyzes the dehydration of (2R,3R)-2,3-dihydroxy-3-methylpentanoate (2,3-dihydroxy-3-methylvalerate) into 2-oxo-3-methylpentanoate (2-oxo-3-methylvalerate) and of (2R)-2,3-dihydroxy-3-methylbutanoate (2,3-dihydroxyisovalerate) into 2-oxo-3-methylbutanoate (2-oxoisovalerate), the penultimate precursor to L-isoleucine and L-valine, respectively. This is Dihydroxy-acid dehydratase 1 from Bordetella pertussis (strain Tohama I / ATCC BAA-589 / NCTC 13251).